We begin with the raw amino-acid sequence, 203 residues long: NAD(P)H dehydrogenase (quinone) (203 aa).

One can recognise a Flavodoxin-like domain in the interval 3 to 194; it reads VLIPFYSMYG…AGARYQGKYI (192 aa). Residues 9-14 and 82-84 contribute to the FMN site; these read SMYGHI and TRF. Tyr11 contributes to the NAD(+) binding site. Trp102 is a binding site for substrate. Residues 117-123 and His138 each bind FMN; that span reads SSATQHG.

This sequence belongs to the WrbA family. The cofactor is FMN.

The catalysed reaction is a quinone + NADH + H(+) = a quinol + NAD(+). The enzyme catalyses a quinone + NADPH + H(+) = a quinol + NADP(+). The polypeptide is NAD(P)H dehydrogenase (quinone) (Geobacter metallireducens (strain ATCC 53774 / DSM 7210 / GS-15)).